The sequence spans 158 residues: Transcription elongation factor GreA (158 aa).

Residues 47–73 (AEYHAAREKQSFIEGRIQELQAKLARA) adopt a coiled-coil conformation.

The protein belongs to the GreA/GreB family.

Functionally, necessary for efficient RNA polymerase transcription elongation past template-encoded arresting sites. The arresting sites in DNA have the property of trapping a certain fraction of elongating RNA polymerases that pass through, resulting in locked ternary complexes. Cleavage of the nascent transcript by cleavage factors such as GreA or GreB allows the resumption of elongation from the new 3'terminus. GreA releases sequences of 2 to 3 nucleotides. This Thermodesulfovibrio yellowstonii (strain ATCC 51303 / DSM 11347 / YP87) protein is Transcription elongation factor GreA.